Consider the following 151-residue polypeptide: 3-hydroxyacyl-[acyl-carrier-protein] dehydratase FabZ (151 aa).

Residue His49 is part of the active site.

The protein belongs to the thioester dehydratase family. FabZ subfamily.

It localises to the cytoplasm. The enzyme catalyses a (3R)-hydroxyacyl-[ACP] = a (2E)-enoyl-[ACP] + H2O. Functionally, involved in unsaturated fatty acids biosynthesis. Catalyzes the dehydration of short chain beta-hydroxyacyl-ACPs and long chain saturated and unsaturated beta-hydroxyacyl-ACPs. This chain is 3-hydroxyacyl-[acyl-carrier-protein] dehydratase FabZ, found in Bordetella petrii (strain ATCC BAA-461 / DSM 12804 / CCUG 43448).